The following is a 333-amino-acid chain: Acetyl-coenzyme A carboxylase carboxyl transferase subunit alpha (333 aa).

In terms of domain architecture, CoA carboxyltransferase C-terminal spans 48-308; sequence LLEQKVDALR…KEMLVEELRD (261 aa).

It belongs to the AccA family. In terms of assembly, acetyl-CoA carboxylase is a heterohexamer composed of biotin carboxyl carrier protein (AccB), biotin carboxylase (AccC) and two subunits each of ACCase subunit alpha (AccA) and ACCase subunit beta (AccD).

It is found in the cytoplasm. It catalyses the reaction N(6)-carboxybiotinyl-L-lysyl-[protein] + acetyl-CoA = N(6)-biotinyl-L-lysyl-[protein] + malonyl-CoA. It participates in lipid metabolism; malonyl-CoA biosynthesis; malonyl-CoA from acetyl-CoA: step 1/1. In terms of biological role, component of the acetyl coenzyme A carboxylase (ACC) complex. First, biotin carboxylase catalyzes the carboxylation of biotin on its carrier protein (BCCP) and then the CO(2) group is transferred by the carboxyltransferase to acetyl-CoA to form malonyl-CoA. The sequence is that of Acetyl-coenzyme A carboxylase carboxyl transferase subunit alpha from Chlorobium limicola (strain DSM 245 / NBRC 103803 / 6330).